The sequence spans 205 residues: MAMQKLFTYIYEFIKYRKMVLLEEKVPYDKFVQMVLNTGFFRINAETLNHGIVSVFIFGANGKYVHHGGDMRTLLTNTLNEKKHYEELILIVDKPVLSKKNILDIIVEQRAANPTIVINIYPYHLFCINIPKVSAIPRHKLITQEEAQEFLGREYLQPQDLMQISASDPPVVWLGGRPGDFVQIERPSETAMHAVVIRFITKSKI.

The protein belongs to the archaeal RpoH/eukaryotic RPB5 RNA polymerase subunit family. In terms of assembly, part of the viral DNA-directed RNA polymerase that consists of 8 polII-like subunits (RPB1, RPB2, RPB3, RPB5, RPB6, RPB7, RPB9, RPB10), a capping enzyme and a termination factor.

Its subcellular location is the host cytoplasm. It is found in the virion. Functionally, component of the DNA-directed RNA polymerase (RNAP) that catalyzes the transcription in the cytoplasm of viral DNA into RNA using the four ribonucleoside triphosphates as substrates. This chain is DNA-directed RNA polymerase RPB5 homolog, found in Ornithodoros (relapsing fever ticks).